We begin with the raw amino-acid sequence, 496 residues long: UDP-N-acetylmuramoyl-L-alanyl-D-glutamate--2,6-diaminopimelate ligase (496 aa).

UDP-N-acetyl-alpha-D-muramoyl-L-alanyl-D-glutamate contacts are provided by leucine 24 and serine 26. 109 to 115 is an ATP binding site; that stretch reads GTNGKTS. Residues 151-152, serine 178, glutamine 184, and arginine 186 each bind UDP-N-acetyl-alpha-D-muramoyl-L-alanyl-D-glutamate; that span reads TT. An N6-carboxylysine modification is found at lysine 218. Meso-2,6-diaminopimelate is bound by residues arginine 387, 411–414, glycine 462, and glutamate 466; that span reads DNPR. A Meso-diaminopimelate recognition motif motif is present at residues 411–414; that stretch reads DNPR.

The protein belongs to the MurCDEF family. MurE subfamily. Mg(2+) serves as cofactor. Post-translationally, carboxylation is probably crucial for Mg(2+) binding and, consequently, for the gamma-phosphate positioning of ATP.

The protein resides in the cytoplasm. The enzyme catalyses UDP-N-acetyl-alpha-D-muramoyl-L-alanyl-D-glutamate + meso-2,6-diaminopimelate + ATP = UDP-N-acetyl-alpha-D-muramoyl-L-alanyl-gamma-D-glutamyl-meso-2,6-diaminopimelate + ADP + phosphate + H(+). The protein operates within cell wall biogenesis; peptidoglycan biosynthesis. Catalyzes the addition of meso-diaminopimelic acid to the nucleotide precursor UDP-N-acetylmuramoyl-L-alanyl-D-glutamate (UMAG) in the biosynthesis of bacterial cell-wall peptidoglycan. The sequence is that of UDP-N-acetylmuramoyl-L-alanyl-D-glutamate--2,6-diaminopimelate ligase from Pseudomonas putida (strain ATCC 47054 / DSM 6125 / CFBP 8728 / NCIMB 11950 / KT2440).